We begin with the raw amino-acid sequence, 155 residues long: Ribosome maturation factor RimP (155 aa).

This sequence belongs to the RimP family.

The protein localises to the cytoplasm. Functionally, required for maturation of 30S ribosomal subunits. The chain is Ribosome maturation factor RimP from Listeria welshimeri serovar 6b (strain ATCC 35897 / DSM 20650 / CCUG 15529 / CIP 8149 / NCTC 11857 / SLCC 5334 / V8).